The primary structure comprises 292 residues: Undecaprenyl-diphosphatase 2 (292 aa).

Helical transmembrane passes span 89 to 109 (WLVILGTLPIGLLGVTLQDAI), 118 to 138 (LIATTLIVLGLILGGADWYAS), 203 to 223 (FLLAMPAVLASGVFELRSIGG), 232 to 252 (PTILATFVAFVTGYAAIAWFL), and 263 to 283 (FVLYRVGLGLLLFSLLVGGAL).

The protein belongs to the UppP family.

The protein resides in the cell membrane. It catalyses the reaction di-trans,octa-cis-undecaprenyl diphosphate + H2O = di-trans,octa-cis-undecaprenyl phosphate + phosphate + H(+). In terms of biological role, catalyzes the dephosphorylation of undecaprenyl diphosphate (UPP). Confers resistance to bacitracin. The protein is Undecaprenyl-diphosphatase 2 of Frankia casuarinae (strain DSM 45818 / CECT 9043 / HFP020203 / CcI3).